We begin with the raw amino-acid sequence, 181 residues long: Ribulose bisphosphate carboxylase small subunit, chloroplastic 1 (181 aa).

The transit peptide at 1–57 (MASSIVSSAAVATRSNVAQASMVAPFTGLKSAASFPVTKKNNNVDITSLASNGGRVR) directs the protein to the chloroplast.

The protein belongs to the RuBisCO small chain family. As to quaternary structure, heterohexadecamer of 8 large and 8 small subunits.

Its subcellular location is the plastid. It localises to the chloroplast. Its function is as follows. RuBisCO catalyzes two reactions: the carboxylation of D-ribulose 1,5-bisphosphate, the primary event in carbon dioxide fixation, as well as the oxidative fragmentation of the pentose substrate. Both reactions occur simultaneously and in competition at the same active site. Although the small subunit is not catalytic it is essential for maximal activity. This is Ribulose bisphosphate carboxylase small subunit, chloroplastic 1 from Solanum tuberosum (Potato).